Here is a 529-residue protein sequence, read N- to C-terminus: Peptide chain release factor 3 (529 aa).

Residues 11–280 (AKRRTFAIIS…GLVKWAPAPM (270 aa)) form the tr-type G domain. GTP is bound by residues 20-27 (SHPDAGKT), 88-92 (DTPGH), and 142-145 (NKLD).

This sequence belongs to the TRAFAC class translation factor GTPase superfamily. Classic translation factor GTPase family. PrfC subfamily.

It is found in the cytoplasm. Functionally, increases the formation of ribosomal termination complexes and stimulates activities of RF-1 and RF-2. It binds guanine nucleotides and has strong preference for UGA stop codons. It may interact directly with the ribosome. The stimulation of RF-1 and RF-2 is significantly reduced by GTP and GDP, but not by GMP. In Photorhabdus laumondii subsp. laumondii (strain DSM 15139 / CIP 105565 / TT01) (Photorhabdus luminescens subsp. laumondii), this protein is Peptide chain release factor 3.